Here is a 262-residue protein sequence, read N- to C-terminus: MNPLLLAVDSGNTRVKWGLHDGRNWLMQGVAAQGDRVQLEREWRDLREPSRVVISNVANAGVKGSLSELLAQWKAEPQWITAVPYQCGVRNYYSNPAQLGSDRWAALVAAWVLERQGCLVVDAGTAMTVDALSDTGEFLGGLITPGLDLMQKILVEDLGSLESEGGKFCDYPDSTADALYSGAVHAMAGAIERMAALLAGTLGHMPECILSGGAAQQLQPQLNVNVKVMDNLVLQGLLAIARETSETASGGVVASPEDSIEN.

9 to 16 (DSGNTRVK) lines the ATP pocket. Substrate is bound by residues Y93 and 100–103 (GSDR). D102 functions as the Proton acceptor in the catalytic mechanism. A K(+)-binding site is contributed by D122. ATP is bound at residue T125. Substrate is bound at residue T175.

The protein belongs to the type III pantothenate kinase family. As to quaternary structure, homodimer. The cofactor is NH4(+). It depends on K(+) as a cofactor.

The protein resides in the cytoplasm. It carries out the reaction (R)-pantothenate + ATP = (R)-4'-phosphopantothenate + ADP + H(+). It functions in the pathway cofactor biosynthesis; coenzyme A biosynthesis; CoA from (R)-pantothenate: step 1/5. In terms of biological role, catalyzes the phosphorylation of pantothenate (Pan), the first step in CoA biosynthesis. The polypeptide is Type III pantothenate kinase (Nitrosospira multiformis (strain ATCC 25196 / NCIMB 11849 / C 71)).